The following is a 219-amino-acid chain: MIWNHGKMILEALLLASPEPLTIKRIAEVIGLDERDAALLMADLQKDYEAPHRGLAIREMAGGYVLTTRPEAAEYVERLLQPKSRGLSHAALETLAIIAYRQPITKAEIENVRGVKVDRALETLLERGLIEDKGRKEAPGRPILYGTTAEFLRYFGLRELSELPPVEIDTSEPGLIVPTRTGGGEAEREVQASLFAGGEEPSAEAADGGAGESTHGEEE.

The interval 193–219 (SLFAGGEEPSAEAADGGAGESTHGEEE) is disordered. Over residues 196–207 (AGGEEPSAEAAD) the composition is skewed to low complexity.

This sequence belongs to the ScpB family. In terms of assembly, homodimer. Homodimerization may be required to stabilize the binding of ScpA to the Smc head domains. Component of a cohesin-like complex composed of ScpA, ScpB and the Smc homodimer, in which ScpA and ScpB bind to the head domain of Smc. The presence of the three proteins is required for the association of the complex with DNA.

Its subcellular location is the cytoplasm. Functionally, participates in chromosomal partition during cell division. May act via the formation of a condensin-like complex containing Smc and ScpA that pull DNA away from mid-cell into both cell halves. The sequence is that of Segregation and condensation protein B from Symbiobacterium thermophilum (strain DSM 24528 / JCM 14929 / IAM 14863 / T).